We begin with the raw amino-acid sequence, 274 residues long: D-aminopeptidase (274 aa).

Residues Asp-8, Glu-10, His-60, and His-104 each contribute to the Zn(2+) site. Catalysis depends on His-115, which acts as the Nucleophile. Glu-133 lines the Zn(2+) pocket.

It belongs to the peptidase M55 family. In terms of assembly, homodecamer. A 20 Angstroms wide channel runs through the complex, giving access to a central chamber holding the active sites. It depends on Zn(2+) as a cofactor.

Functionally, hydrolyzes N-terminal residues in D-amino acid containing peptides. Among the tested substrates, the highest activities are with D-Ala-D-Ala and D-Ala-Gly-Gly. The physiological role is not clear. The polypeptide is D-aminopeptidase (dppA) (Bacillus subtilis (strain 168)).